A 428-amino-acid polypeptide reads, in one-letter code: Dihydroorotase (428 aa).

Positions 59 and 61 each coordinate Zn(2+). Substrate is bound by residues 61-63 and Asn93; that span reads HLR. Zn(2+) is bound by residues Asp151, His178, and His231. Position 277 (Asn277) interacts with substrate. Residue Asp304 coordinates Zn(2+). The active site involves Asp304. Substrate is bound by residues His308 and 322-323; that span reads FG.

This sequence belongs to the metallo-dependent hydrolases superfamily. DHOase family. Class I DHOase subfamily. Requires Zn(2+) as cofactor.

The catalysed reaction is (S)-dihydroorotate + H2O = N-carbamoyl-L-aspartate + H(+). Its pathway is pyrimidine metabolism; UMP biosynthesis via de novo pathway; (S)-dihydroorotate from bicarbonate: step 3/3. Catalyzes the reversible cyclization of carbamoyl aspartate to dihydroorotate. The polypeptide is Dihydroorotase (Bacillus cereus (strain G9842)).